The chain runs to 1235 residues: DNA polymerase catalytic subunit (1235 aa).

Disordered stretches follow at residues 640 to 693 (QGRF…AGRH) and 1098 to 1134 (AAAPGDEPAPPAALPSPAKRPRETPSHADPPGGASKP). Residues 650–661 (APKRPAAAREDE) are compositionally biased toward basic and acidic residues. Over residues 662 to 675 (ERPEEEGEDEDERE) the composition is skewed to acidic residues. Positions 676–691 (EGGGEREPEGARETAG) are enriched in basic and acidic residues.

This sequence belongs to the DNA polymerase type-B family. As to quaternary structure, forms a complex with the ssDNA-binding protein UL29, the DNA polymerase processivity factor, and the alkaline exonuclease. Interacts with the putative helicase-primase complex subunit UL8; this interaction may coordinate leading and lagging strand DNA synthesis at the replication fork.

The protein resides in the host nucleus. It carries out the reaction DNA(n) + a 2'-deoxyribonucleoside 5'-triphosphate = DNA(n+1) + diphosphate. It catalyses the reaction Endonucleolytic cleavage to 5'-phosphomonoester.. Its function is as follows. Replicates viral genomic DNA. The replication complex is composed of six viral proteins: the DNA polymerase, processivity factor, primase, primase-associated factor, helicase, and ssDNA-binding protein. Additionally, the polymerase contains an intrinsic ribonuclease H (RNase H) activity that specifically degrades RNA/DNA heteroduplexes or duplex DNA substrates in the 5' to 3' direction. Therefore, it can catalyze the excision of the RNA primers that initiate the synthesis of Okazaki fragments at a replication fork during viral DNA replication. The sequence is that of DNA polymerase catalytic subunit from Human herpesvirus 1 (strain KOS) (HHV-1).